The following is a 246-amino-acid chain: NAD-dependent protein deacylase (246 aa).

One can recognise a Deacetylase sirtuin-type domain in the interval 2 to 246 (PTAVSDAAAP…AGVCLPAMLA (245 aa)). An NAD(+)-binding site is contributed by 29 to 49 (GAGVSAESGVPTFRDALTGLW). Substrate-binding residues include tyrosine 74 and arginine 77. Residue 107–110 (QNVD) coordinates NAD(+). The active-site Proton acceptor is histidine 125. Zn(2+) is bound by residues cysteine 137, cysteine 140, cysteine 153, and cysteine 156. NAD(+) contacts are provided by residues 193-195 (GTS), 219-221 (NPE), and alanine 237.

Belongs to the sirtuin family. Class III subfamily. It depends on Zn(2+) as a cofactor.

The protein localises to the cytoplasm. It carries out the reaction N(6)-acetyl-L-lysyl-[protein] + NAD(+) + H2O = 2''-O-acetyl-ADP-D-ribose + nicotinamide + L-lysyl-[protein]. The enzyme catalyses N(6)-succinyl-L-lysyl-[protein] + NAD(+) + H2O = 2''-O-succinyl-ADP-D-ribose + nicotinamide + L-lysyl-[protein]. Its function is as follows. NAD-dependent lysine deacetylase and desuccinylase that specifically removes acetyl and succinyl groups on target proteins. Modulates the activities of several proteins which are inactive in their acylated form. The chain is NAD-dependent protein deacylase from Ralstonia nicotianae (strain ATCC BAA-1114 / GMI1000) (Ralstonia solanacearum).